The chain runs to 479 residues: Sulfate adenylyltransferase subunit 1 (479 aa).

Residues 25–239 (KSLLRFLTCG…EVLETVDIQR (215 aa)) form the tr-type G domain. Positions 34–41 (GSVDDGKS) are G1. 34–41 (GSVDDGKS) contributes to the GTP binding site. The interval 92-96 (GITID) is G2. The tract at residues 113–116 (DTPG) is G3. GTP is bound by residues 113–117 (DTPGH) and 168–171 (NKMD). The interval 168-171 (NKMD) is G4. The tract at residues 206 to 208 (SAL) is G5.

This sequence belongs to the TRAFAC class translation factor GTPase superfamily. Classic translation factor GTPase family. CysN/NodQ subfamily. As to quaternary structure, heterodimer composed of CysD, the smaller subunit, and CysN.

It catalyses the reaction sulfate + ATP + H(+) = adenosine 5'-phosphosulfate + diphosphate. It functions in the pathway sulfur metabolism; hydrogen sulfide biosynthesis; sulfite from sulfate: step 1/3. Functionally, with CysD forms the ATP sulfurylase (ATPS) that catalyzes the adenylation of sulfate producing adenosine 5'-phosphosulfate (APS) and diphosphate, the first enzymatic step in sulfur assimilation pathway. APS synthesis involves the formation of a high-energy phosphoric-sulfuric acid anhydride bond driven by GTP hydrolysis by CysN coupled to ATP hydrolysis by CysD. The protein is Sulfate adenylyltransferase subunit 1 of Salmonella arizonae (strain ATCC BAA-731 / CDC346-86 / RSK2980).